A 24-amino-acid chain; its full sequence is Ascaphin-2 (24 aa).

In terms of tissue distribution, expressed by the skin glands.

It is found in the secreted. Antimicrobial peptide that shows higher potency against Gram-negative bacteria than against Gram-positive bacteria. Has a very week hemolytic activity. The polypeptide is Ascaphin-2 (Ascaphus truei (Coastal tailed frog)).